Reading from the N-terminus, the 1486-residue chain is Protein PRRC2B (1486 aa).

Disordered regions lie at residues 1–20, 39–306, 320–341, 385–519, and 531–658; these read MSDR…KYST, VIPR…FPLP, QMND…PLRQ, KFSD…AREE, and LDQK…EQLY. The span at 88–137 shows a compositional bias: polar residues; it reads ANKQDQQDPKSSSVTASQPPESQPQPGLQKSVSNLQKPTQSISQENTNSV. Residues serine 166, serine 168, serine 222, and serine 226 each carry the phosphoserine modification. Positions 219-235 are enriched in polar residues; the sequence is SAASLSASPTELGSRNA. Position 228 is a phosphothreonine (threonine 228). Lysine 251 participates in a covalent cross-link: Glycyl lysine isopeptide (Lys-Gly) (interchain with G-Cter in SUMO2). Over residues 288–300 the composition is skewed to polar residues; that stretch reads SPQSSENQTTVER. Residues serine 387 and serine 415 each carry the phosphoserine modification. 3 stretches are compositionally biased toward basic and acidic residues: residues 422-433, 478-488, and 501-519; these read TDAKRTQEEGKD, HSAEDKEDKPP, and AVER…AREE. At serine 479 the chain carries Phosphoserine. Residues 494-544 are a coiled coil; sequence IQSEMSEAVERARKRREEEERRAREERLAACAAKLKQLDQKCRQAQKANET. Phosphoserine is present on serine 555. The segment covering 600–611 has biased composition (low complexity); it reads SNSSSSSSSSSS. Phosphoserine is present on serine 621. Low complexity predominate over residues 638–656; sequence QRQQQQQQQQQQQQQQQEQ. A Glycyl lysine isopeptide (Lys-Gly) (interchain with G-Cter in SUMO2) cross-link involves residue lysine 751. Threonine 753 bears the Phosphothreonine mark. Phosphoserine occurs at positions 762 and 793. Disordered regions lie at residues 792 to 847, 893 to 918, and 950 to 1080; these read RSPD…EARK, EERR…IPPR, and ALPV…PGAV. Positions 880–904 form a coiled coil; it reads IEVLTKKQRRLLEEERRKKEQAAQV. Residues 960-986 are compositionally biased toward polar residues; sequence SWRTAVTAFSSTEPGTSEQGFKSSQGD. Residues 998–1007 show a composition bias toward low complexity; the sequence is SSATSSQRSS. Composition is skewed to basic and acidic residues over residues 1025–1055 and 1062–1074; these read SKAD…EHRP and RSLK…EGAE. 2 positions are modified to phosphoserine: serine 1070 and serine 1159. 3 disordered regions span residues 1177 to 1205, 1410 to 1443, and 1455 to 1486; these read KAWE…SSVG, QSIQ…TSRE, and ADSK…AWEP. Positions 1181–1191 are enriched in polar residues; that stretch reads NSPSLPEQSSP. A compositionally biased stretch (low complexity) spans 1410–1421; sequence QSIQLPPGQSLS. Polar residues predominate over residues 1457 to 1474; the sequence is SKQNVPTGGSAPSPQAYR.

This is Protein PRRC2B (Prrc2b) from Mus musculus (Mouse).